The sequence spans 525 residues: cAMP-dependent protein kinase regulatory subunit (525 aa).

Positions glutamine 28–leucine 213 are dimerization and phosphorylation. Disordered stretches follow at residues methionine 114–glycine 146 and serine 170–proline 196. Residues proline 124–glycine 146 are compositionally biased toward low complexity. Residue serine 170 is modified to Phosphoserine; by autocatalysis. A nucleoside 3',5'-cyclic phosphate contacts are provided by residues leucine 214–aspartate 345 and leucine 348–aspartate 472. 3',5'-cyclic AMP-binding residues include glutamate 295, arginine 304, and glutamate 417. The tract at residues serine 497 to alanine 525 is disordered.

This sequence belongs to the cAMP-dependent kinase regulatory chain family. As to quaternary structure, tetramer, composed of 2 regulatory (R) and 2 catalytic (C) subunits. In the presence of cAMP it dissociates into 2 active monomeric C subunits and an R dimer.

This is cAMP-dependent protein kinase regulatory subunit (PKAR) from Mycosarcoma maydis (Corn smut fungus).